A 66-amino-acid polypeptide reads, in one-letter code: DNA gyrase inhibitor YacG (66 aa).

The Zn(2+) site is built by cysteine 9, cysteine 12, cysteine 28, and cysteine 32.

The protein belongs to the DNA gyrase inhibitor YacG family. Interacts with GyrB. Zn(2+) serves as cofactor.

In terms of biological role, inhibits all the catalytic activities of DNA gyrase by preventing its interaction with DNA. Acts by binding directly to the C-terminal domain of GyrB, which probably disrupts DNA binding by the gyrase. This chain is DNA gyrase inhibitor YacG, found in Pseudomonas fluorescens (strain Pf0-1).